Consider the following 762-residue polypeptide: Centrosomal protein of 85 kDa (762 aa).

Disordered stretches follow at residues 1–26 (MAMQ…IQKG) and 94–119 (VMPS…SKLP). Composition is skewed to polar residues over residues 14–26 (HVTS…IQKG) and 98–111 (TLGT…STPV). Serine 17 carries the phosphoserine modification. Serine 126 and serine 141 each carry phosphoserine. A mediates interaction with NEK2 and is required for its function in the suppression of centrosome disjunction region spans residues 257-433 (GLSKPLPSQV…QLIRESLKVA (177 aa)). 2 coiled-coil regions span residues 334–657 (EHLL…RQAQ) and 723–750 (PDVI…MSDR). A required for centrosome localization and for its function in the suppression of centrosome disjunction region spans residues 434–476 (LQKHSEEVKKQEERVKGRDKHINNLKKKCQKESEQNREKQQRI). 2 stretches are compositionally biased toward basic and acidic residues: residues 443–455 (KQEE…DKHI) and 463–474 (QKESEQNREKQQ). 2 disordered regions span residues 443-474 (KQEE…EKQQ) and 541-570 (EAEF…VEME). Serine 623 is modified (phosphoserine).

Belongs to the CEP85 family. As to quaternary structure, homodimer. Interacts with STIL (via N-terminus); this interaction is essential for robust PLK4 activation and efficient centriole assembly and for PLK4-dependent cell migration. Interacts with PLK4; required for CEP85 to be able to drive centriole duplication and cell migration.

The protein localises to the cytoplasm. It localises to the cytoskeleton. The protein resides in the microtubule organizing center. Its subcellular location is the centrosome. It is found in the spindle pole. The protein localises to the nucleus. It localises to the nucleolus. The protein resides in the centriole. Its subcellular location is the cell cortex. Functionally, acts as a regulator of centriole duplication through a direct interaction with STIL, a key factor involved in the early steps of centriole formation. The CEP85-STIL protein complex acts as a modulator of PLK4-driven cytoskeletal rearrangements and directional cell motility. Acts as a negative regulator of NEK2 to maintain the centrosome integrity in interphase. Suppresses centrosome disjunction by inhibiting NEK2 kinase activity. The protein is Centrosomal protein of 85 kDa of Homo sapiens (Human).